A 101-amino-acid polypeptide reads, in one-letter code: Small ribosomal subunit protein uS14 (101 aa).

This sequence belongs to the universal ribosomal protein uS14 family. In terms of assembly, part of the 30S ribosomal subunit. Contacts proteins S3 and S10.

In terms of biological role, binds 16S rRNA, required for the assembly of 30S particles and may also be responsible for determining the conformation of the 16S rRNA at the A site. In Aromatoleum aromaticum (strain DSM 19018 / LMG 30748 / EbN1) (Azoarcus sp. (strain EbN1)), this protein is Small ribosomal subunit protein uS14.